The following is a 1250-amino-acid chain: SRC kinase signaling inhibitor 1 (1250 aa).

A compositionally biased stretch (basic and acidic residues) spans 19-45 (AEGRARSPREEVGPRDPGGRGEPDPER). Residues 19–78 (AEGRARSPREEVGPRDPGGRGEPDPERSSPPMLSADDAEYPREYRTLGGGGGGGSGGRRF) form a disordered region. Phosphoserine is present on residues S47 and S52. The span at 65–75 (LGGGGGGGSGG) shows a compositional bias: gly residues. S79 carries the phosphoserine modification. The residue at position 86 (T86) is a Phosphothreonine. Phosphoserine is present on residues S87, S98, S211, S233, S237, S247, and S293. At Y309 the chain carries Phosphotyrosine. The disordered stretch occupies residues 352-448 (ASRESSPTRR…RRDVKPDEDL (97 aa)). Positions 354-364 (RESSPTRRLNN) are enriched in polar residues. Residues 365–374 (LSPASHLASS) show a composition bias toward low complexity. 3 positions are modified to phosphoserine: S366, S375, and S392. Over residues 381 to 399 (PSGLPSGLPSGSPSRSRLS) the composition is skewed to low complexity. Omega-N-methylarginine is present on residues R397 and R404. 3 positions are modified to phosphoserine: S411, S430, and S432. Residues 437-448 (LERRDVKPDEDL) are compositionally biased toward basic and acidic residues. The residue at position 464 (Y464) is a Phosphotyrosine. The interval 538-710 (PSSPQKLADV…ASSTPAGQPT (173 aa)) is disordered. Residues 552–563 (GGPPPPHSPYSG) show a composition bias toward pro residues. Phosphoserine is present on residues S559, S562, and S566. R567 is modified (omega-N-methylarginine). Residues S569, S579, S581, S583, and S588 each carry the phosphoserine modification. Over residues 590–607 (GGKARSTGSASTAGAPPS) the composition is skewed to low complexity. Positions 628 to 640 (KDTETRERMEAME) are enriched in basic and acidic residues. S664 and S688 each carry phosphoserine. A phosphothreonine mark is found at T691 and T704. The segment covering 701-710 (ASSTPAGQPT) has biased composition (low complexity). Coiled-coil stretches lie at residues 712–753 (VSRL…RALL) and 793–813 (EELI…IQRD). Residues 714–764 (RLQMQLHLRGLQNSASDLRGQLQQLRNVQLQNQESVRALLKPTEADVSMRV) form an interaction with SNAP25 region. S911 and S933 each carry phosphoserine. Disordered stretches follow at residues 924-982 (GLDF…ERDW) and 1016-1094 (DCAS…TGEV). T951 is subject to Phosphothreonine. S1054 carries the phosphoserine modification. Residues 1069 to 1078 (KSPPPPPPRR) show a composition bias toward pro residues. Phosphoserine is present on residues S1110 and S1127. Positions 1155–1250 (ELESGGSSVP…FGARNSSISF (96 aa)) are disordered. Residues 1217–1250 (PNETSSPGSEKPSGSRTSIPVLTSFGARNSSISF) are compositionally biased toward polar residues.

It belongs to the SRCIN1 family. As to quaternary structure, interacts with the N-terminal coiled-coil region of SNAP25. Interacts with BCAR1/p130Cas and SRC through its C-terminal domain. Interacts with CSK, CTTN, SORBS3/vinexin, SYP and MAPRE3/EB3. Post-translationally, tyrosine-phosphorylated in response to EGF and to cell adhesion to integrin ligands. Expressed predominantly in central nervous system with high levels detected in cortex, cerebellum, midbrain and spinal cord (at protein level). Also expressed in testis and epithelial-rich tissues such as mammary gland, lung and kidney.

It is found in the cytoplasm. The protein resides in the cytoskeleton. Its subcellular location is the cell projection. The protein localises to the axon. It localises to the dendrite. It is found in the presynapse. The protein resides in the postsynapse. Its subcellular location is the postsynaptic density. Functionally, acts as a negative regulator of SRC by activating CSK which inhibits SRC activity and downstream signaling, leading to impaired cell spreading and migration. Regulates dendritic spine morphology. Involved in calcium-dependent exocytosis. May play a role in neurotransmitter release or synapse maintenance. In Mus musculus (Mouse), this protein is SRC kinase signaling inhibitor 1 (Srcin1).